We begin with the raw amino-acid sequence, 1609 residues long: Probable cation-transporting ATPase I (1609 aa).

The next 10 helical transmembrane spans lie at 30-50, 176-196, 238-258, 357-377, 641-661, 673-693, 778-798, 921-941, 969-989, and 997-1017; these read GAVN…WPVV, LAIL…SAAV, IALS…GTPL, LIAA…AGAI, VHLA…ASAG, WFSP…VSAS, ILAV…ALLV, LFEG…ATGV, TSKV…LALL, and AVAD…PLVA. The active-site 4-aspartylphosphate intermediate is Asp-1053. Asp-1335 and Asp-1339 together coordinate Mg(2+). 2 helical membrane passes run 1396–1416 and 1426–1446; these read ILVG…VFGA and LLLV…VTSQ. The disordered stretch occupies residues 1447-1476; sequence YEEPGEDEYQTDEEADEARRTHQHEVLTGP. The segment covering 1449–1462 has biased composition (acidic residues); it reads EPGEDEYQTDEEAD. 2 helical membrane-spanning segments follow: residues 1542–1562 and 1573–1593; these read VVAT…TPVI and PIAW…SVLA.

It belongs to the cation transport ATPase (P-type) (TC 3.A.3) family.

Its subcellular location is the cell membrane. The enzyme catalyses ATP + H2O = ADP + phosphate + H(+). This Mycobacterium leprae (strain TN) protein is Probable cation-transporting ATPase I (ctpI).